We begin with the raw amino-acid sequence, 240 residues long: Glutathione S-transferase theta-1 (240 aa).

The region spanning 2–82 is the GST N-terminal domain; the sequence is VLELYLDLLS…YLAHKYKVPD (81 aa). Residues histidine 40, 53 to 54, and 66 to 67 each bind glutathione; these read RV and ES. The region spanning 88 to 222 is the GST C-terminal domain; that stretch reads DLQARARVDE…VILKVKDCPP (135 aa).

The protein belongs to the GST superfamily. Theta family. As to quaternary structure, homodimer. In liver, highest expression found in central vein limiting plate hepatocytes. Also expressed in interlobular bile duct epithelial cells. In lung, expressed in club cells and ciliated cells of the bronchiolar epithelium and in type II alveolar cells of the lung parenchyma.

It is found in the cytoplasm. Its subcellular location is the nucleus. The catalysed reaction is RX + glutathione = an S-substituted glutathione + a halide anion + H(+). In terms of biological role, conjugation of reduced glutathione to a wide number of exogenous and endogenous hydrophobic electrophiles. Also binds steroids, bilirubin, carcinogens and numerous organic anions. Has dichloromethane dehalogenase activity. The protein is Glutathione S-transferase theta-1 (Gstt1) of Mus musculus (Mouse).